Here is a 363-residue protein sequence, read N- to C-terminus: Dual-specificity RNA methyltransferase RlmN (363 aa).

Residue glutamate 102 is the Proton acceptor of the active site. The 237-residue stretch at 108-344 (EKKRSTLCVS…TTTIRKNRGE (237 aa)) folds into the Radical SAM core domain. Residues cysteine 115 and cysteine 350 are joined by a disulfide bond. Cysteine 122, cysteine 126, and cysteine 129 together coordinate [4Fe-4S] cluster. S-adenosyl-L-methionine contacts are provided by residues 174–175 (GE), serine 206, 228–230 (SLH), and asparagine 307. Catalysis depends on cysteine 350, which acts as the S-methylcysteine intermediate.

It belongs to the radical SAM superfamily. RlmN family. It depends on [4Fe-4S] cluster as a cofactor.

It localises to the cytoplasm. It catalyses the reaction adenosine(2503) in 23S rRNA + 2 reduced [2Fe-2S]-[ferredoxin] + 2 S-adenosyl-L-methionine = 2-methyladenosine(2503) in 23S rRNA + 5'-deoxyadenosine + L-methionine + 2 oxidized [2Fe-2S]-[ferredoxin] + S-adenosyl-L-homocysteine. The catalysed reaction is adenosine(37) in tRNA + 2 reduced [2Fe-2S]-[ferredoxin] + 2 S-adenosyl-L-methionine = 2-methyladenosine(37) in tRNA + 5'-deoxyadenosine + L-methionine + 2 oxidized [2Fe-2S]-[ferredoxin] + S-adenosyl-L-homocysteine. Specifically methylates position 2 of adenine 2503 in 23S rRNA and position 2 of adenine 37 in tRNAs. m2A2503 modification seems to play a crucial role in the proofreading step occurring at the peptidyl transferase center and thus would serve to optimize ribosomal fidelity. The protein is Dual-specificity RNA methyltransferase RlmN of Buchnera aphidicola subsp. Acyrthosiphon pisum (strain APS) (Acyrthosiphon pisum symbiotic bacterium).